A 190-amino-acid chain; its full sequence is MPRANEIKKGMVLNYNGKLLLVKDIDIQSPTARGAATLYKMRFSDVRTGLKVEERFKGDDIVDTVTLTRRYVDFSYVDGNEYVFMDKEDYTPYTFTKDQIEEELLFMPEGGMPDMQVLTWDGQLLALELPQTVDLEIVETAPGIKGASASARNKPATLSTGLVIQVPEYLSPGEKIRIHIEERRYMGRAD.

It belongs to the elongation factor P family.

This is Elongation factor P-like protein from Shigella dysenteriae serotype 1 (strain Sd197).